A 380-amino-acid chain; its full sequence is Cytochrome b (380 aa).

4 helical membrane-spanning segments follow: residues 33 to 53 (FGSLLGLCLITQIATGLFLAM), 77 to 98 (WLIRNLHANGASFFFICIYLHI), 113 to 133 (WNVGVILLLLVMMTAFVGYVL), and 178 to 198 (FFAFHFLLPFIIAAATVIHLL). Residues histidine 83 and histidine 97 each contribute to the heme b site. Residues histidine 182 and histidine 196 each coordinate heme b. Residue histidine 201 coordinates a ubiquinone. 4 helical membrane-spanning segments follow: residues 226–246 (YKDLLGFAALLIALTSLALFS), 288–308 (LGGVLALLFSILVLMLVPILH), 320–340 (ITQFLFWTLVADVIILTWIGG), and 347–367 (FIIIGQIASFLYFFLFLVLTP).

It belongs to the cytochrome b family. As to quaternary structure, the cytochrome bc1 complex contains 3 respiratory subunits (MT-CYB, CYC1 and UQCRFS1), 2 core proteins (UQCRC1 and UQCRC2) and probably 6 low-molecular weight proteins. It depends on heme b as a cofactor.

The protein resides in the mitochondrion inner membrane. Component of the ubiquinol-cytochrome c reductase complex (complex III or cytochrome b-c1 complex) that is part of the mitochondrial respiratory chain. The b-c1 complex mediates electron transfer from ubiquinol to cytochrome c. Contributes to the generation of a proton gradient across the mitochondrial membrane that is then used for ATP synthesis. The sequence is that of Cytochrome b (mt-cyb) from Dactyloptena peterseni (Starry flying gurnard).